We begin with the raw amino-acid sequence, 273 residues long: Dermonecrotic toxin LapSicTox-alphaIB2 (273 aa).

Residue His5 is part of the active site. 2 residues coordinate Mg(2+): Glu25 and Asp27. His41 (nucleophile) is an active-site residue. 2 cysteine pairs are disulfide-bonded: Cys45/Cys51 and Cys47/Cys190. Asp85 contributes to the Mg(2+) binding site. Residue Asn250 is glycosylated (N-linked (GlcNAc...) asparagine).

Belongs to the arthropod phospholipase D family. Class II subfamily. Mg(2+) serves as cofactor. In terms of tissue distribution, expressed by the venom gland.

The protein localises to the secreted. It carries out the reaction an N-(acyl)-sphingosylphosphocholine = an N-(acyl)-sphingosyl-1,3-cyclic phosphate + choline. The catalysed reaction is an N-(acyl)-sphingosylphosphoethanolamine = an N-(acyl)-sphingosyl-1,3-cyclic phosphate + ethanolamine. It catalyses the reaction a 1-acyl-sn-glycero-3-phosphocholine = a 1-acyl-sn-glycero-2,3-cyclic phosphate + choline. The enzyme catalyses a 1-acyl-sn-glycero-3-phosphoethanolamine = a 1-acyl-sn-glycero-2,3-cyclic phosphate + ethanolamine. In terms of biological role, dermonecrotic toxins cleave the phosphodiester linkage between the phosphate and headgroup of certain phospholipids (sphingolipid and lysolipid substrates), forming an alcohol (often choline) and a cyclic phosphate. This toxin acts on sphingomyelin (SM). It may also act on ceramide phosphoethanolamine (CPE), lysophosphatidylcholine (LPC) and lysophosphatidylethanolamine (LPE), but not on lysophosphatidylserine (LPS), and lysophosphatidylglycerol (LPG). It acts by transphosphatidylation, releasing exclusively cyclic phosphate products as second products. Induces dermonecrosis, hemolysis, increased vascular permeability, edema, inflammatory response, and platelet aggregation. This chain is Dermonecrotic toxin LapSicTox-alphaIB2, found in Loxosceles apachea (Apache recluse spider).